The following is a 521-amino-acid chain: MARVVPAWLLLPLAVWVVLPTWLSSAKFSSLIERISDPKDLKKLLRTRNNVLVLYSKSEAAAESHLKLLSTVAQAVKGQGTICWVDCGDAESRKLCKKMKVDLSAKDKKVELFHYQDGAFHTEYNRAVTFKSIVAFLKDPKGPPLWEEDPGAKDVVHIDNEKDFRRLLKKEEKPILMMFYAPWCSVCKRIMPHFQKAATQLRGQFVLAGMNVYPSEFENIKEEYSVRGYPTICYFEKGRFLFQYDSYGSTAEDIVEWLKNPQPPQPQVPETPWADEGGSVYHLSDEDFDQFVKEHSSVLVMFHAPWCGHCKKMKPEFESAAEVLHGEGDSSGVLAAVDATVNKALAERFHIAEFPTLKYFKNGEKYAVPALRTKKSFIEWMRNPESPPPPDPAWEEQQTSVLHLSGDNFRETLKRKKHALVMFYAPWCPHCKKAIPHFTAAADAFKDDRKIACAAIDCVKENNKDLCQQEAVKAYPTFHYYHYGKFVEKYDTNPTELGFTSFIRTLREGDHERLGKKKEEL.

Residues 1 to 25 (MARVVPAWLLLPLAVWVVLPTWLSS) form the signal peptide. 3 consecutive Thioredoxin domains span residues 136–263 (FLKD…NPQP), 274–386 (ADEG…NPES), and 387–508 (PPPP…TLRE). 3 disulfides stabilise this stretch: cysteine 184-cysteine 187, cysteine 307-cysteine 310, and cysteine 428-cysteine 431. The Prevents secretion from ER motif lies at 518–521 (KEEL).

Belongs to the protein disulfide isomerase family.

It localises to the endoplasmic reticulum lumen. It carries out the reaction Catalyzes the rearrangement of -S-S- bonds in proteins.. This chain is Protein disulfide-isomerase A5 (PDIA5), found in Bos taurus (Bovine).